Reading from the N-terminus, the 211-residue chain is Transcriptional regulator GfcR (211 aa).

Belongs to the purine/pyrimidine phosphoribosyltransferase family. GfcR subfamily.

The polypeptide is Transcriptional regulator GfcR (Methanocaldococcus jannaschii (strain ATCC 43067 / DSM 2661 / JAL-1 / JCM 10045 / NBRC 100440) (Methanococcus jannaschii)).